We begin with the raw amino-acid sequence, 149 residues long: Large ribosomal subunit protein bL9 (149 aa).

The protein belongs to the bacterial ribosomal protein bL9 family.

Its function is as follows. Binds to the 23S rRNA. This is Large ribosomal subunit protein bL9 from Persephonella marina (strain DSM 14350 / EX-H1).